We begin with the raw amino-acid sequence, 410 residues long: Kynureninase (410 aa).

Residues threonine 108, serine 109, 135-138 (FPTD), threonine 176, aspartate 205, histidine 208, and tyrosine 230 contribute to the pyridoxal 5'-phosphate site. Lysine 231 carries the N6-(pyridoxal phosphate)lysine modification. Pyridoxal 5'-phosphate contacts are provided by tryptophan 260 and threonine 286.

Belongs to the kynureninase family. Homodimer. Pyridoxal 5'-phosphate is required as a cofactor.

It carries out the reaction L-kynurenine + H2O = anthranilate + L-alanine + H(+). The enzyme catalyses 3-hydroxy-L-kynurenine + H2O = 3-hydroxyanthranilate + L-alanine + H(+). Its pathway is amino-acid degradation; L-kynurenine degradation; L-alanine and anthranilate from L-kynurenine: step 1/1. It participates in cofactor biosynthesis; NAD(+) biosynthesis; quinolinate from L-kynurenine: step 2/3. Functionally, catalyzes the cleavage of L-kynurenine (L-Kyn) and L-3-hydroxykynurenine (L-3OHKyn) into anthranilic acid (AA) and 3-hydroxyanthranilic acid (3-OHAA), respectively. This chain is Kynureninase, found in Deinococcus radiodurans (strain ATCC 13939 / DSM 20539 / JCM 16871 / CCUG 27074 / LMG 4051 / NBRC 15346 / NCIMB 9279 / VKM B-1422 / R1).